The sequence spans 503 residues: MADIYPLGKTHTEELNEIIVESAKEIAEPDTTMIQKLIDEHNPEPLLKGVRYYMCENDIEKKRRTYYDAAGQQLVDDTKTNNRTSHAWHKLFVDQKTQYLVGEPVTFTSDNKTLLEYVNELADDDFDDILNETVKNMSNKGIEYWHPFVDEEGEFDYVIFPAEEMIVVYKDNTRRDILFALRYYSYKGIMGEETQKAELYTDTHVYYYEKIDGVYQMDYSYGENNPRPHMTKGGQAIGWGRVPIIPFKNNEEMVSDLKFYKDLIDNYDSITSSTMDSFSDFQQIVYVLKNYDGENPKEFTANLRYHSVIKVSGDGGVDTLRAEIPVDSAAKELERIQDELYKSAQAVDNSPETIGGGATGPALENLYALLDLKANMAERKIRAGLRLFFWFFAEYLRNTGKGDFNPDKELTMTFTRTRIQNDSEIVQSLVQGVTGGIMSKETAVARNPFVQDPEEELARIEEEMNQYAEMQGNLLDDEGGDDDLEEDDPNAGAAESGGAGQVS.

Residues 463–503 are disordered; the sequence is EMNQYAEMQGNLLDDEGGDDDLEEDDPNAGAAESGGAGQVS. Over residues 475-489 the composition is skewed to acidic residues; that stretch reads LDDEGGDDDLEEDDP.

It belongs to the SPP1-like portal protein family. As to quaternary structure, homododecamer. Has been seen as 13-mer and 14-mer multimer in experiments, but assembles as homododecamer in vivo. Interacts with the gp7 protein. Interacts with the connector proteins gp15; this interaction occurs at the end of the packaging when the terminase complex is replaced by the connector.

The protein localises to the virion. Forms the portal vertex of the capsid. This portal plays critical roles in head assembly, genome packaging, neck/tail attachment, and genome ejection. The portal protein multimerizes as a single ring-shaped homododecamer arranged around a central channel. Binds to the terminase subunits to form the packaging machine. Necessary to ensure correct procapsid size during capsid assembly. Once the capsid is packaged with the DNA, the terminase complex is substituted by the connector proteins gp15. The chain is Portal protein (6) from Bacillus phage SPP1 (Bacteriophage SPP1).